Here is a 146-residue protein sequence, read N- to C-terminus: Transcriptional regulator AdcR (146 aa).

In terms of domain architecture, HTH marR-type spans 1–143; the sequence is MRQLAKDINA…IQRFLTALVG (143 aa). Residues Glu-24, Cys-30, Glu-41, and His-42 each coordinate Zn(2+). The H-T-H motif DNA-binding region spans 54–77; the sequence is NSELARRLNVSQAAVTKAIKSLVK. Positions 107, 108, and 112 each coordinate Zn(2+).

Homodimer.

Its activity is regulated as follows. Zinc acts as a coregulator and is required for DNA-binding activity. Its function is as follows. Zinc-responsive regulator that acts both as a repressor and as an activator by regulating directly the promoters of its target genes. In the presence of zinc, directly represses the expression of the adcRCBA operon, of genes coding for a group of surface antigen zinc-binding pneumococcal histidine triad proteins (PhtA, PhtB, PhtD and PhtE), and of adcAII. Can also activate expression of adh. This is Transcriptional regulator AdcR (adcR) from Streptococcus pneumoniae serotype 2 (strain D39 / NCTC 7466).